A 502-amino-acid polypeptide reads, in one-letter code: 1-aminocyclopropane-1-carboxylate synthase-like protein 1 (502 aa).

Positions 1–24 (MFCLPQQESTAPTTCTGSASTQDM) are disordered. Glutamate 106 contributes to the substrate binding site. The residue at position 324 (lysine 324) is an N6-(pyridoxal phosphate)lysine.

Belongs to the class-I pyridoxal-phosphate-dependent aminotransferase family.

Its function is as follows. Does not catalyze the synthesis of 1-aminocyclopropane-1-carboxylate but is capable of catalyzing the deamination of L-vinylglycine. This is 1-aminocyclopropane-1-carboxylate synthase-like protein 1 (Accs) from Mus musculus (Mouse).